Consider the following 461-residue polypeptide: Trigger factor (461 aa).

Residues 166-245 (GDFANIDLTA…VNSVKAEELP (80 aa)) form the PPIase FKBP-type domain.

It belongs to the FKBP-type PPIase family. Tig subfamily.

It is found in the cytoplasm. It carries out the reaction [protein]-peptidylproline (omega=180) = [protein]-peptidylproline (omega=0). Functionally, involved in protein export. Acts as a chaperone by maintaining the newly synthesized protein in an open conformation. Functions as a peptidyl-prolyl cis-trans isomerase. The sequence is that of Trigger factor from Bifidobacterium animalis subsp. lactis (strain AD011).